Here is a 224-residue protein sequence, read N- to C-terminus: Oxalate oxidase GF-3.8 (224 aa).

Residues Met-1–Ser-23 form the signal peptide. The cysteines at positions 33 and 49 are disulfide-linked. Positions Ser-63–Glu-214 constitute a Cupin type-1 domain. N-linked (GlcNAc...) asparagine glycans are attached at residues Asn-70 and Asn-75. Residues His-111, His-113, Glu-118, and His-160 each contribute to the Mn(2+) site.

Belongs to the germin family. Oligomer (believed to be a pentamer but probably hexamer).

The protein resides in the secreted. It localises to the extracellular space. It is found in the apoplast. The protein localises to the cytoplasm. Its subcellular location is the cell wall. It carries out the reaction oxalate + O2 + 2 H(+) = H2O2 + 2 CO2. Functionally, produces developmental and stress-related release of hydrogen peroxide in the apoplast. May play an important role in several aspects of plant growth and defense mechanisms. The sequence is that of Oxalate oxidase GF-3.8 from Triticum aestivum (Wheat).